The primary structure comprises 532 residues: MVKRVAIVGAGVSGLASIKCCLEEGLEPTCFERSCDLGGLWRFTEHVEEGRASLYNSVVSNSSKEMSCYSDFPFPEDYPNFVPNSLFLEYLQLYATQFNLLRCIYFNTKVCSITKRPDFAVSGQWEVVTVCQGKQSSDTFDAVMVCTGFLTNPHLPLDSFPGIQTFKGQYFHSRQYKHPDVFKDKRVLVVGMGNSGTDIAVEASHLAKKVFLSTTGGAWVISRVFDSGYPWDMIFMTRFQNMLRNLLPTPVVSWLISKKMNSWFNHVNYGVAPEDRTQLREPVLNDELPGRIITGKVLIKPSIKEVKENSVVFNNTPKEEPIDVIVFATGYSFAFPFLDESIVKVEDGQASLYKYIFPAHLPKPTLAVIGLIKPLGSMIPTGETQARWVVQVLKGATTLPPPSVMMKEVNERKKNKHSGFGLCYCKALQSDYITYIDDLLTSINAKPDLRAMLLTDPRLALSIFFGPCTPYHFRLTGPGKWEGARKAILTQWDRTVNVTKTRTVQETPSTFETLLKLFSFLALLVAVFFIFL.

Residues 1-510 (MVKRVAIVGA…TRTVQETPST (510 aa)) lie on the Lumenal side of the membrane. FAD is bound by residues 9–13 (GAGVS), E32, 40–41 (LW), and 61–62 (NS). NADP(+) is bound by residues 60–61 (SN) and 195–198 (SGTD). A helical membrane pass occupies residues 511–531 (FETLLKLFSFLALLVAVFFIF). Residue L532 is a topological domain, cytoplasmic.

This sequence belongs to the FMO family. FAD is required as a cofactor. In terms of tissue distribution, expressed in liver, lung and kidney and to a lesser extent in the heart and brain.

The protein localises to the endoplasmic reticulum membrane. The catalysed reaction is hypotaurine + NADPH + O2 + H(+) = taurine + NADP(+) + H2O. It catalyses the reaction hypotaurine + NADH + O2 + H(+) = taurine + NAD(+) + H2O. It carries out the reaction trimethylamine + NADPH + O2 = trimethylamine N-oxide + NADP(+) + H2O. The enzyme catalyses N,N-dimethylaniline + NADPH + O2 + H(+) = N,N-dimethylaniline N-oxide + NADP(+) + H2O. Broad spectrum monooxygenase that catalyzes the oxygenation of a wide variety of nitrogen- and sulfur-containing compounds including xenobiotics. Catalyzes the S-oxygenation of hypotaurine to produce taurine, an organic osmolyte involved in cell volume regulation as well as a variety of cytoprotective and developmental processes. In vitro, catalyzes the N-oxygenation of trimethylamine (TMA) to produce trimethylamine N-oxide (TMAO) and could therefore participate to the detoxification of this compound that is generated by the action of gut microbiota from dietary precursors such as choline, choline containing compounds, betaine or L-carnitine. This is Flavin-containing monooxygenase 1 from Rattus norvegicus (Rat).